The chain runs to 505 residues: L-carnitine/gamma-butyrobetaine antiporter (505 aa).

The next 12 helical transmembrane spans lie at 10–30 (IEPKVFFPPLIIVGILCWLTV), 51–71 (WGWAFEWYMVVMLFGWFWLVF), 92–112 (IFMMFASCTSAAVLFWGSIEI), 143–163 (GPLPWATYSFLSVAFAYFFFV), 195–215 (FYLVALIFAMGTSLGLATPLV), 231–251 (LDAIIITCWIILNAICVACGL), 263–283 (SYLSFLMLGWVFIVSGASFIM), 316–336 (WTVFYWAWWVIYAIQMSIFLA), 347–367 (LCFGMVMGLTASTWILWTVLG), 403–423 (LSTATMWGFFILCFIATVTLI), 446–466 (LLVRIGWSVLVGIIGIVLLAL), and 475–495 (AIIAGGCPLFFVNIMVTLSFI).

It belongs to the BCCT transporter (TC 2.A.15) family. CaiT subfamily. In terms of assembly, homotrimer.

Its subcellular location is the cell inner membrane. The enzyme catalyses 4-(trimethylamino)butanoate(in) + (R)-carnitine(out) = 4-(trimethylamino)butanoate(out) + (R)-carnitine(in). Its pathway is amine and polyamine metabolism; carnitine metabolism. Catalyzes the exchange of L-carnitine for gamma-butyrobetaine. This chain is L-carnitine/gamma-butyrobetaine antiporter, found in Salmonella agona (strain SL483).